The chain runs to 246 residues: MTYKLVLLRHGQSAWNKTNQFTGWVDVPLTEQGEAEAKRGGELLKEKNVLPDIVFTSLLRRAINTANIALDAADRLWIPVQRDWRLNERHYGALQGKNKTEIREEYGDEKFMLWRRSYATPPPEIDPNDQYAQNNDPRYAGDPVPEAECLANVVERVKPYFESAIEPELKAGKTVLIAAHGNSLRAIVKMLDNLSEEEIAKVNIPTAIPLLYELDENFKPIKPRGEYLDPEAAAAGAAAVAAQGQK.

Substrate is bound by residues 9 to 16 (RHGQSAWN), 22 to 23 (TG), Arg61, 88 to 91 (ERHY), Lys99, 115 to 116 (RR), and 181 to 182 (GN). His10 serves as the catalytic Tele-phosphohistidine intermediate. The Proton donor/acceptor role is filled by Glu88.

Belongs to the phosphoglycerate mutase family. BPG-dependent PGAM subfamily.

The catalysed reaction is (2R)-2-phosphoglycerate = (2R)-3-phosphoglycerate. Its pathway is carbohydrate degradation; glycolysis; pyruvate from D-glyceraldehyde 3-phosphate: step 3/5. Functionally, catalyzes the interconversion of 2-phosphoglycerate and 3-phosphoglycerate. The sequence is that of 2,3-bisphosphoglycerate-dependent phosphoglycerate mutase from Bifidobacterium longum (strain DJO10A).